The primary structure comprises 63 residues: UPF0434 protein BAV2101 (63 aa).

The protein belongs to the UPF0434 family.

The protein is UPF0434 protein BAV2101 of Bordetella avium (strain 197N).